The primary structure comprises 60 residues: UPF0291 protein CTC_01690.1 (60 aa).

This sequence belongs to the UPF0291 family.

It is found in the cytoplasm. The sequence is that of UPF0291 protein CTC_01690.1 from Clostridium tetani (strain Massachusetts / E88).